Consider the following 1058-residue polypeptide: MPKRKDIQKIMVIGSGPIIIGQAAEFDYAGTQACLALKEEGYKVILVNSNPATIMTDKEIADKIYIEPLTLEFVNRIIRKERPDAILPTLGGQTGLNMAMALSKAGILDDLEIELLGTKLSAIDQAEDRDLFKQLMQELDQPIPESTIVKTVDEAVTFARDIGYPVIVRPAFTLGGTGGGICSSEEELCEITENGLKLSPVTQCLIERSIAGFKEIEYEVMRDSADNALVVCNMENFDPVGIHTGDSIVFAPTQTLSDIENQMLRDASLKIIRALKIEGGCNVQLALDPYSFKYYVIEVNPRVSRSSALASKATGYPIAKLAAKIAVGLTLDEMINPITGTTYAMFEPALDYVVAKIPRFPFDKFEHGERQLGTQMKATGEVMAIGRNLEESLLKACRSLEIGVCHNEMTSLSNISDEELVTKVIKAQDDRLFYLSEAIRRGYSIEELESLTKIDLFFLDKLLHIVEIEQELQMHVDHLESLKKAKRYGFSDQKIAEIWQKDESDIRAMRHSHSLCPVYKMVDTCAAEFDAKTPYFYSTYELENESVQSNKESILVLGSGPIRIGQGVEFDYATVHSVKAIQKAGYEAIIMNSNPETVSTDFSVSDKLYFEPLTFEDVMNVIDLEQPKGVIVQFGGQTAINLAQSLSDAGVTILGTQVEDLDRAEDRDLFEKALKELGIPQPQGQTATNEEEALEAAKKIGFPVLVRPSYVLGGRAMEIVENKEDLREYIRTAVKASPEHPILVDSYIFGKECEVDAISDGKSVLIPGIMEHIERAGVHSGDSMAVYPPQQLSKQIQETIAEYTKRLAIGLNCIGMMNVQFVIKNEQVYVIEVNPRASRTVPFLSKVTGIPMAQIATKLILGQTLKDLGYEDGLYPQSQLVHIKAPVFSFTKLAQVDSLLGPEMKSTGEVMGSDTSLEKALYKAFEANNSHLSEFGQIVFTIADDSKAEALSLARRFKAIGYQIMATQGTAAYFAEQGLSACLVGKIGDAANDIPTLVRHGHVQAIVNTVGIKRTADKDGQMIRSSAIEQGVPLFTALDTAKAMLTVLESRCFNIEAI.

The tract at residues 1-401 (MPKRKDIQKI…SLLKACRSLE (401 aa)) is carboxyphosphate synthetic domain. ATP-binding residues include Arg129, Arg169, Gly175, Gly176, Arg208, Ile210, Glu215, Gly241, Ile242, His243, Gln284, and Glu298. The ATP-grasp 1 domain maps to 133 to 327 (KQLMQELDQP…IAKLAAKIAV (195 aa)). Mg(2+) is bound by residues Gln284, Glu298, and Asn300. Residues Gln284, Glu298, and Asn300 each coordinate Mn(2+). The segment at 402-546 (IGVCHNEMTS…YSTYELENES (145 aa)) is oligomerization domain. A carbamoyl phosphate synthetic domain region spans residues 547–929 (VQSNKESILV…ALYKAFEANN (383 aa)). Residues 671–861 (EKALKELGIP…MAQIATKLIL (191 aa)) enclose the ATP-grasp 2 domain. The ATP site is built by Arg707, Ser746, Ile748, Glu752, Gly777, Val778, His779, Ser780, Gln820, and Glu832. The Mg(2+) site is built by Gln820, Glu832, and Asn834. Residues Gln820, Glu832, and Asn834 each contribute to the Mn(2+) site. An MGS-like domain is found at 930 to 1058 (SHLSEFGQIV…ESRCFNIEAI (129 aa)). The allosteric domain stretch occupies residues 930-1058 (SHLSEFGQIV…ESRCFNIEAI (129 aa)).

It belongs to the CarB family. Composed of two chains; the small (or glutamine) chain promotes the hydrolysis of glutamine to ammonia, which is used by the large (or ammonia) chain to synthesize carbamoyl phosphate. Tetramer of heterodimers (alpha,beta)4. Requires Mg(2+) as cofactor. The cofactor is Mn(2+).

It carries out the reaction hydrogencarbonate + L-glutamine + 2 ATP + H2O = carbamoyl phosphate + L-glutamate + 2 ADP + phosphate + 2 H(+). It catalyses the reaction hydrogencarbonate + NH4(+) + 2 ATP = carbamoyl phosphate + 2 ADP + phosphate + 2 H(+). It participates in amino-acid biosynthesis; L-arginine biosynthesis; carbamoyl phosphate from bicarbonate: step 1/1. The protein operates within pyrimidine metabolism; UMP biosynthesis via de novo pathway; (S)-dihydroorotate from bicarbonate: step 1/3. In terms of biological role, large subunit of the glutamine-dependent carbamoyl phosphate synthetase (CPSase). CPSase catalyzes the formation of carbamoyl phosphate from the ammonia moiety of glutamine, carbonate, and phosphate donated by ATP, constituting the first step of 2 biosynthetic pathways, one leading to arginine and/or urea and the other to pyrimidine nucleotides. The large subunit (synthetase) binds the substrates ammonia (free or transferred from glutamine from the small subunit), hydrogencarbonate and ATP and carries out an ATP-coupled ligase reaction, activating hydrogencarbonate by forming carboxy phosphate which reacts with ammonia to form carbamoyl phosphate. In Streptococcus pyogenes serotype M18 (strain MGAS8232), this protein is Carbamoyl phosphate synthase large chain.